The primary structure comprises 140 residues: Ubiquitin-like protein ATG12 (140 aa).

Residues 1–50 (MAEEPQSVLQLPTSIAAGGEGLTDVSPETTTPEPPSSAAVSPGTEEPAGD) form a disordered region. Low complexity predominate over residues 25-42 (VSPETTTPEPPSSAAVSP). Residue glycine 140 forms a Glycyl lysine isopeptide (Gly-Lys) (interchain with K-130 in ATG5) linkage.

It belongs to the ATG12 family. Forms a conjugate with ATG5. Part of the minor complex composed of 4 sets of ATG12-ATG5 and ATG16L1 (400 kDa); this complex interacts with ATG3 leading to disruption of ATG7 interaction and promotion of ATG8-like proteins lipidation. Forms an 800-kDa complex composed of ATG12-ATG5 and ATG16L2. Interacts with DHX58/RIG-1, IFIH1/MDA5 and MAVS/IPS-1 in monomeric form as well as in ATG12-ATG5 conjugate. The interaction with MAVS is further enhanced upon vesicular stomatitis virus (VSV) infection. Interacts with ATG3; this interaction is essential for phosphatidylethanolamine (PE)-conjugated ATG8-like proteins formation. Interacts with ATG7. Interacts with ATG10. The ATG12-ATG5 conjugate interacts with RAB33A; this interaction is bridged by ATG16L1 and promotes ATG12-ATG5-ATG16L1 complex recruitment to phagophores. Interacts with TECPR1. Interacts with SH3BGRL. The ATG12-ATG5 conjugate interacts with PDCD6IP (via the BRO1 domain); this interaction is bridged by ATG12 and promotes multiple PDCD6IP-mediated functions such as endolysosomal trafficking, macroautophagy and exosome biogenesis. In terms of processing, acetylated by EP300. Ubiquitous.

It localises to the cytoplasm. It is found in the preautophagosomal structure membrane. Functionally, ubiquitin-like protein involved in autophagy vesicles formation. Conjugation with ATG5 through a ubiquitin-like conjugating system involving also ATG7 as an E1-like activating enzyme and ATG10 as an E2-like conjugating enzyme, is essential for its function. The ATG12-ATG5 conjugate acts as an E3-like enzyme which is required for lipidation of ATG8 family proteins and their association to the vesicle membranes. As part of the ATG8 conjugation system with ATG5 and ATG16L1, required for recruitment of LRRK2 to stressed lysosomes and induction of LRRK2 kinase activity in response to lysosomal stress. In terms of biological role, (Microbial infection) May act as a proviral factor. In association with ATG5, negatively regulates the innate antiviral immune response by impairing the type I IFN production pathway upon vesicular stomatitis virus (VSV) infection. Required for the translation of incoming hepatitis C virus (HCV) RNA and, thereby, for the initiation of HCV replication, but not required once infection is established. The protein is Ubiquitin-like protein ATG12 of Homo sapiens (Human).